The chain runs to 618 residues: Glycine--tRNA ligase 2 (618 aa).

Position 187 (E187) interacts with glycine. Residues R219–E221 and R230–V231 each bind ATP. Residue E238 participates in glycine binding. E347–C348 provides a ligand contact to ATP. E466–S468 serves as a coordination point for glycine. ATP is bound at residue R473.

It belongs to the class-II aminoacyl-tRNA synthetase family. In terms of assembly, homodimer.

It localises to the cytoplasm. The enzyme catalyses tRNA(Gly) + glycine + ATP = glycyl-tRNA(Gly) + AMP + diphosphate. It catalyses the reaction 2 ATP + H(+) = P(1),P(4)-bis(5'-adenosyl) tetraphosphate + diphosphate. Catalyzes the ATP-dependent ligation of glycine to the 3'-end of its cognate tRNA, via the formation of an aminoacyl-adenylate intermediate (Gly-AMP). Also produces diadenosine tetraphosphate (Ap4A), a universal pleiotropic signaling molecule needed for cell regulation pathways, by direct condensation of 2 ATPs. Thereby, may play a special role in Ap4A homeostasis. This is Glycine--tRNA ligase 2 (GRS2) from Saccharomyces cerevisiae (strain ATCC 204508 / S288c) (Baker's yeast).